A 362-amino-acid chain; its full sequence is Protein RecA (362 aa).

65–72 contacts ATP; that stretch reads GPESSGKT. The disordered stretch occupies residues 323–362; sequence RVANGMEPLNEKSTKETADDKASGKTGENKQETIEEASKE. Over residues 331–362 the composition is skewed to basic and acidic residues; it reads LNEKSTKETADDKASGKTGENKQETIEEASKE.

Belongs to the RecA family.

It localises to the cytoplasm. Its function is as follows. Can catalyze the hydrolysis of ATP in the presence of single-stranded DNA, the ATP-dependent uptake of single-stranded DNA by duplex DNA, and the ATP-dependent hybridization of homologous single-stranded DNAs. It interacts with LexA causing its activation and leading to its autocatalytic cleavage. The chain is Protein RecA from Limosilactobacillus reuteri (strain DSM 20016) (Lactobacillus reuteri).